Consider the following 510-residue polypeptide: Serine/threonine protein phosphatase 2A 57 kDa regulatory subunit B' kappa isoform (510 aa).

Residues 1–51 (MWKGFLSKLPRKTSASGRGADLDSGQCSNGAGNGNPIQRTSSCGSIPSGRS) form a disordered region. Residues 25–51 (GQCSNGAGNGNPIQRTSSCGSIPSGRS) are compositionally biased toward polar residues. Phosphothreonine occurs at positions 476 and 493. Serine 502 carries the phosphoserine modification. Position 508 is a phosphothreonine (threonine 508).

Belongs to the phosphatase 2A regulatory subunit B56 family. As to quaternary structure, PP2A consists of a common heteromeric enzyme, composed of a catalytic subunit (subunits C), a constant regulatory subunit (subunit A), and a variety of regulatory subunits such as subunits B (the R2/B/PR55/B55, R3/B''/PR72/PR130/PR59 and R5/B'/B56 families). Interacts with SIT1. In terms of processing, phosphorylated at Thr-476, Thr-493, Ser-502 and Thr-508 by SIT1. As to expression, expressed in root stele and epidermal cells.

The protein localises to the cytoplasm. The protein resides in the cytosol. Its subcellular location is the cell membrane. Functionally, b regulatory subunit of phosphatase 2A (PP2A) involved in salt stress response. Under salt stress conditions, required for the catalytic activity of PP2A and the dephosphorylation of SIT1, a negative regulator of salt tolerance. Dephosphorylation of SIT1 turns off salt-induced SIT1 activity directly, which has a positive effect on salt tolerance. This Oryza sativa subsp. japonica (Rice) protein is Serine/threonine protein phosphatase 2A 57 kDa regulatory subunit B' kappa isoform.